The primary structure comprises 510 residues: Cytochrome P450 monooxygenase btcC (510 aa).

The chain crosses the membrane as a helical span at residues 1–21 (MSFPGVIFVVSFFPLLMGIAV). Residue C446 participates in heme binding.

It belongs to the cytochrome P450 family. Heme is required as a cofactor.

Its subcellular location is the membrane. The protein operates within secondary metabolite biosynthesis; terpenoid biosynthesis. In terms of biological role, cytochrome P450 monooxygenase; part of the gene cluster that mediates the biosynthesis of betaestacins. The bifunctional terpene synthase btcA converts isopentenyl diphosphate (IPP) and dimethylallyl diphosphate (DMAPP) into the sesterterpene betaestacin I. The C-terminal prenyltransferase (PT) domain of btcA catalyzes formation of GFPP, whereas the N-terminal terpene cyclase (TC) domain catalyzes the cyclization of GFPP into betaestacin I. The cytochrome P450 monooxygenase btcB is then responsible for the six-step oxidation of betaestacin I to yield betaestacin II. The roles of the cytochrome P450 monooxygenase btcC and the alpha-ketoglutarate-dependent dioxygenase btcD have not been identified yet. This Neocamarosporium betae (Beet black rot fungus) protein is Cytochrome P450 monooxygenase btcC.